A 124-amino-acid polypeptide reads, in one-letter code: Holo-[acyl-carrier-protein] synthase (124 aa).

Mg(2+)-binding residues include Asp8 and Glu56.

It belongs to the P-Pant transferase superfamily. AcpS family. Mg(2+) is required as a cofactor.

It is found in the cytoplasm. It catalyses the reaction apo-[ACP] + CoA = holo-[ACP] + adenosine 3',5'-bisphosphate + H(+). In terms of biological role, transfers the 4'-phosphopantetheine moiety from coenzyme A to a Ser of acyl-carrier-protein. The sequence is that of Holo-[acyl-carrier-protein] synthase from Nitratidesulfovibrio vulgaris (strain DP4) (Desulfovibrio vulgaris).